The primary structure comprises 200 residues: MTDFQFYLASNSPRRAQILQQLGFRFALCCCEIDETPLPDEKGADYVLRMAIEKNNAARQQWQQAKFSQNRPHLPFLSADTSVILEDKILGKPKNEADARAMLRALSARTHQVITAVCVADENQMQTVIQTSHVRFKVLTEKEIQGYIATGEPMDKAGAYGIQQLGGVFVEHIEGSFSGVMGLPVCETVALLKAFGVELF.

The Proton acceptor role is filled by Asp-80.

Belongs to the Maf family. YhdE subfamily. The cofactor is a divalent metal cation.

Its subcellular location is the cytoplasm. The catalysed reaction is dTTP + H2O = dTMP + diphosphate + H(+). It catalyses the reaction UTP + H2O = UMP + diphosphate + H(+). Nucleoside triphosphate pyrophosphatase that hydrolyzes dTTP and UTP. May have a dual role in cell division arrest and in preventing the incorporation of modified nucleotides into cellular nucleic acids. The chain is dTTP/UTP pyrophosphatase from Pasteurella multocida (strain Pm70).